The primary structure comprises 667 residues: DNA ligase (667 aa).

NAD(+) contacts are provided by residues 32-36, 81-82, and E110; these read DSEYD and SL. K112 serves as the catalytic N6-AMP-lysine intermediate. R133, E167, K283, and K307 together coordinate NAD(+). Zn(2+) is bound by residues C401, C404, C419, and C424. One can recognise a BRCT domain in the interval 586–667; sequence EGHPEFSGKT…FVDKQNELNS (82 aa).

The protein belongs to the NAD-dependent DNA ligase family. LigA subfamily. Mg(2+) is required as a cofactor. The cofactor is Mn(2+).

The catalysed reaction is NAD(+) + (deoxyribonucleotide)n-3'-hydroxyl + 5'-phospho-(deoxyribonucleotide)m = (deoxyribonucleotide)n+m + AMP + beta-nicotinamide D-nucleotide.. Its function is as follows. DNA ligase that catalyzes the formation of phosphodiester linkages between 5'-phosphoryl and 3'-hydroxyl groups in double-stranded DNA using NAD as a coenzyme and as the energy source for the reaction. It is essential for DNA replication and repair of damaged DNA. In Staphylococcus aureus (strain COL), this protein is DNA ligase.